The following is a 605-amino-acid chain: ATP-dependent RNA helicase DBP3 (605 aa).

The disordered stretch occupies residues 1-124 (MSAEELVASP…TPALSKKQQK (124 aa)). Positions 54–66 (KDKKDKKEKKDKK) are enriched in basic residues. Residues 104 to 114 (PVSTATPTESE) show a composition bias toward polar residues. A Q motif motif is present at residues 175–201 (LSIRDLPINSKLQPFLNKFEKPTPIQA). Residues 204 to 391 (WPALLSKKDV…STFLNNPLRI (188 aa)) form the Helicase ATP-binding domain. Residue 217 to 224 (AETGSGKT) participates in ATP binding. Residues 336 to 339 (DEAD) carry the DEAD box motif. Positions 424–575 (HLKAHLKVHP…EIPKEMDRFP (152 aa)) constitute a Helicase C-terminal domain.

This sequence belongs to the DEAD box helicase family. DDX5/DBP2 subfamily.

It is found in the nucleus. The protein localises to the nucleolus. It catalyses the reaction ATP + H2O = ADP + phosphate + H(+). Functionally, ATP-dependent RNA helicase required for 60S ribosomal subunit synthesis. Involved in efficient pre-rRNA processing, predominantly at site A3, which is necessary for the normal formation of 25S and 5.8S rRNAs. This Cryptococcus neoformans var. neoformans serotype D (strain JEC21 / ATCC MYA-565) (Filobasidiella neoformans) protein is ATP-dependent RNA helicase DBP3 (DBP3).